The primary structure comprises 189 residues: Ribonuclease HII (189 aa).

The RNase H type-2 domain occupies Met1–Cys189. The a divalent metal cation site is built by Asp6, Glu7, and Asp98.

It belongs to the RNase HII family. Mn(2+) is required as a cofactor. The cofactor is Mg(2+).

Its subcellular location is the cytoplasm. The catalysed reaction is Endonucleolytic cleavage to 5'-phosphomonoester.. Endonuclease that specifically degrades the RNA of RNA-DNA hybrids. This Acinetobacter baylyi (strain ATCC 33305 / BD413 / ADP1) protein is Ribonuclease HII.